A 312-amino-acid chain; its full sequence is Ribosomal RNA small subunit methyltransferase H (312 aa).

Residues 33–35 (GGH), Asp53, Phe80, Asp101, and Gln108 each bind S-adenosyl-L-methionine.

This sequence belongs to the methyltransferase superfamily. RsmH family.

It is found in the cytoplasm. The enzyme catalyses cytidine(1402) in 16S rRNA + S-adenosyl-L-methionine = N(4)-methylcytidine(1402) in 16S rRNA + S-adenosyl-L-homocysteine + H(+). In terms of biological role, specifically methylates the N4 position of cytidine in position 1402 (C1402) of 16S rRNA. The polypeptide is Ribosomal RNA small subunit methyltransferase H (Desulfosudis oleivorans (strain DSM 6200 / JCM 39069 / Hxd3) (Desulfococcus oleovorans)).